The primary structure comprises 103 residues: Large ribosomal subunit protein bL21 (103 aa).

The protein belongs to the bacterial ribosomal protein bL21 family. Part of the 50S ribosomal subunit. Contacts protein L20.

Functionally, this protein binds to 23S rRNA in the presence of protein L20. The protein is Large ribosomal subunit protein bL21 of Polynucleobacter asymbioticus (strain DSM 18221 / CIP 109841 / QLW-P1DMWA-1) (Polynucleobacter necessarius subsp. asymbioticus).